The sequence spans 648 residues: Transcription termination factor FttA (648 aa).

The tract at residues 1–179 (MIKRETQVDQ…QVGRNIYRKP (179 aa)) is not required for dimerization, required for cleavage at some sites. The interval 9 to 76 (DQILKDIRGI…ISIRPDPDVL (68 aa)) is KHa. Residues 77–144 (LPPEEAEKLI…WAPKVVRTPP (68 aa)) are KHb. Residues 185–395 (WIRITGLGGF…LVMESTYGGA (211 aa)) are metallo-beta-lactamase N-terminus. Residues His-253, His-255, Asp-257, His-258, His-341, and Asp-364 each coordinate Zn(2+). Residues 396–589 (NDIQMPREEA…MEVHTIDGFS (194 aa)) are beta-Casp. The interval 590-648 (GHADRRELMNYVAKVRPRPERVITVHGEPQKCLDLATSIHRKFGLSTRAPNNLDTIRLR) is metallo-beta-lactamase C-terminus. His-615 lines the Zn(2+) pocket.

This sequence belongs to the metallo-beta-lactamase superfamily. RNA-metabolizing metallo-beta-lactamase-like family. FttA subfamily. As to quaternary structure, homodimer. Interacts with RNA polymerase (RNAP), interacts with the Spt4-Spt5 complex. Requires Zn(2+) as cofactor.

Its activity is regulated as follows. EndoRNase activity is inhibited by 1,10-phenanthroline. In terms of biological role, terminates transcription on the whole genome. Termination is linked to FttA-mediated RNA cleavage and does not require NTP hydrolysis. Cleaves endonucleolytically at the RNA exit channel of RNA polymerase (RNAP); the 5'-3' exonuclease activity of this protein degrades the nascent RNA released from RNAP. A single-stranded endoribonuclease (endoRNase) with a preference for cleavage at CA dinucleotides. Has 5'-3' exoribonuclease (exoRNase) activity on 5'-monophosphorylated RNA; this activity does not occur on 5'-tri-phosphorylated or 5'-OH substrates. Also has weak activity 5'-3' exodeoxyribonuclease activity on ssDNA. The protein is Transcription termination factor FttA of Pyrococcus abyssi (strain GE5 / Orsay).